Reading from the N-terminus, the 426-residue chain is Serine--tRNA ligase (426 aa).

233–235 (TAE) contributes to the L-serine binding site. 264–266 (RSE) lines the ATP pocket. Glu287 contributes to the L-serine binding site. 351–354 (EISS) contributes to the ATP binding site. Ser387 provides a ligand contact to L-serine.

It belongs to the class-II aminoacyl-tRNA synthetase family. Type-1 seryl-tRNA synthetase subfamily. As to quaternary structure, homodimer. The tRNA molecule binds across the dimer.

The protein resides in the cytoplasm. The catalysed reaction is tRNA(Ser) + L-serine + ATP = L-seryl-tRNA(Ser) + AMP + diphosphate + H(+). The enzyme catalyses tRNA(Sec) + L-serine + ATP = L-seryl-tRNA(Sec) + AMP + diphosphate + H(+). Its pathway is aminoacyl-tRNA biosynthesis; selenocysteinyl-tRNA(Sec) biosynthesis; L-seryl-tRNA(Sec) from L-serine and tRNA(Sec): step 1/1. In terms of biological role, catalyzes the attachment of serine to tRNA(Ser). Is also able to aminoacylate tRNA(Sec) with serine, to form the misacylated tRNA L-seryl-tRNA(Sec), which will be further converted into selenocysteinyl-tRNA(Sec). The chain is Serine--tRNA ligase from Azotobacter vinelandii (strain DJ / ATCC BAA-1303).